A 65-amino-acid polypeptide reads, in one-letter code: Large ribosomal subunit protein bL35 (65 aa).

Belongs to the bacterial ribosomal protein bL35 family.

This is Large ribosomal subunit protein bL35 from Polynucleobacter asymbioticus (strain DSM 18221 / CIP 109841 / QLW-P1DMWA-1) (Polynucleobacter necessarius subsp. asymbioticus).